The chain runs to 278 residues: Non-heme chloroperoxidase (278 aa).

Residues 26–264 form the AB hydrolase-1 domain; the sequence is PVVLIHGFPL…GAPHGLLWTH (239 aa). Catalysis depends on residues S99, D229, and H258.

It belongs to the AB hydrolase superfamily. Bacterial non-heme haloperoxidase / perhydrolase family. As to quaternary structure, homodimer.

This chain is Non-heme chloroperoxidase (cpo), found in Kitasatospora aureofaciens (Streptomyces aureofaciens).